Reading from the N-terminus, the 901-residue chain is Dipeptidyl-aminopeptidase B (901 aa).

The span at 1–22 (MSSPRPSTSSTSSDSGLSVDTT) shows a compositional bias: low complexity. A disordered region spans residues 1–67 (MSSPRPSTSS…EPFLPSAKKQ (67 aa)). The Cytoplasmic portion of the chain corresponds to 1–76 (MSSPRPSTSS…QAASGSRTSR (76 aa)). A helical; Signal-anchor for type II membrane protein membrane pass occupies residues 77–97 (LIWGLVILCVAGWLWGLVLFV). At 98–901 (TQNRSAQQSV…VKRSLPMLVN (804 aa)) the chain is on the vacuolar side. N-linked (GlcNAc...) asparagine glycans are attached at residues Asn334 and Asn625. Catalysis depends on Ser739, which acts as the Charge relay system. Asn793 is a glycosylation site (N-linked (GlcNAc...) asparagine). Residues Asp816 and His849 each act as charge relay system in the active site.

It belongs to the peptidase S9B family.

It localises to the vacuole membrane. The enzyme catalyses Release of an N-terminal dipeptide, Xaa-Yaa-|-Zaa-, from a polypeptide, preferentially when Yaa is Pro, provided Zaa is neither Pro nor hydroxyproline.. Functionally, type IV dipeptidyl-peptidase which removes N-terminal dipeptides sequentially from polypeptides having unsubstituted N-termini provided that the penultimate residue is proline. The sequence is that of Dipeptidyl-aminopeptidase B (dapB) from Aspergillus niger.